We begin with the raw amino-acid sequence, 425 residues long: GTPase Obg (425 aa).

Residues 1–158 (MFVDQVKVYV…RYIVMELKLI (158 aa)) enclose the Obg domain. Positions 118-144 (KGGRGGRGNNRFANSSNPAPHISENGE) are disordered. An OBG-type G domain is found at 159 to 327 (ADVGLVGYPS…LMYAIGDTLA (169 aa)). ATP is bound by residues 165-172 (GYPSVGKS), 190-194 (FTTLT), 211-214 (DLPG), 281-284 (NKME), and 308-310 (SAA). Positions 172 and 192 each coordinate Mg(2+). The OCT domain maps to 348–425 (RAEKEPDAFE…IGKLEFDFVE (78 aa)).

This sequence belongs to the TRAFAC class OBG-HflX-like GTPase superfamily. OBG GTPase family. In terms of assembly, monomer. The cofactor is Mg(2+).

Its subcellular location is the cytoplasm. An essential GTPase which binds GTP, GDP and possibly (p)ppGpp with moderate affinity, with high nucleotide exchange rates and a fairly low GTP hydrolysis rate. Plays a role in control of the cell cycle, stress response, ribosome biogenesis and in those bacteria that undergo differentiation, in morphogenesis control. This Brevibacillus brevis (strain 47 / JCM 6285 / NBRC 100599) protein is GTPase Obg.